We begin with the raw amino-acid sequence, 127 residues long: DNA-directed RNA polymerases I, II, and III subunit RPABC2 (127 aa).

A compositionally biased stretch (acidic residues) spans 1–34 (MSDNEDNFDGDDFDDVEEDEGLDDLENAEEEGQE). A disordered region spans residues 1-53 (MSDNEDNFDGDDFDDVEEDEGLDDLENAEEEGQENVEILPSGERPQANQKRIT). S2 is modified (N-acetylserine). S2 carries the post-translational modification Phosphoserine; by CK2.

The protein belongs to the archaeal Rpo6/eukaryotic RPB6 RNA polymerase subunit family. In terms of assembly, component of the RNA polymerase I (Pol I), RNA polymerase II (Pol II) and RNA polymerase III (Pol III) complexes consisting of at least 13, 12 and 17 subunits, respectively. Pol I complex consists of a ten-subunit catalytic core composed of POLR1A/RPA1, POLR1B/RPA2, POLR1C/RPAC1, POLR1D/RPAC2, POLR1H/RPA12, POLR2E/RPABC1, POLR2F/RPABC2, POLR2H/RPABC3, POLR2K/RPABC4 and POLR2L/RPABC5; a mobile stalk subunit POLR1F/RPA43 protruding from the core and additional subunits homologous to general transcription factors POLR1E/RPA49 and POLR1G/RPA34. Part of Pol I pre-initiation complex (PIC), in which Pol I core assembles with RRN3 and promoter-bound UTBF and SL1/TIF-IB complex. Pol II complex contains a ten-subunit catalytic core composed of POLR2A/RPB1, POLR2B/RPB2, POLR2C/RPB3, POLR2I/RPB9, POLR2J/RPB11, POLR2E/RPABC1, POLR2F/RPABC2, POLR2H/RPABC3, POLR2K/RPABC4 and POLR2L/RPABC5 and a mobile stalk composed of two subunits POLR2D/RPB4 and POLR2G/RPB7. Part of Pol II(G) complex, in which Pol II core associates with an additional subunit POLR2M; unlike conventional Pol II, Pol II(G) functions as a transcriptional repressor. Part of TBP-based Pol II pre-initiation complex (PIC), in which Pol II core assembles with general transcription factors and other specific initiation factors including GTF2E1, GTF2E2, GTF2F1, GTF2F2, TCEA1, ERCC2, ERCC3, GTF2H2, GTF2H3, GTF2H4, GTF2H5, GTF2A1, GTF2A2, GTF2B and TBP; this large multi-subunit PIC complex mediates DNA unwinding and targets Pol II core to the transcription start site where the first phosphodiester bond forms. Pol III complex consists of a ten-subunit catalytic core composed of POLR3A/RPC1, POLR3B/RPC2, POLR1C/RPAC1, POLR1D/RPAC2, POLR3K/RPC10, POLR2E/RPABC1, POLR2F/RPABC2, POLR2H/RPABC3, POLR2K/RPABC4 and POLR2L/RPABC5; a mobile stalk composed of two subunits POLR3H/RPC8 and CRCP/RPC9, protruding from the core and functioning primarily in transcription initiation; and additional subunits homologous to general transcription factors of the RNA polymerase II machinery, POLR3C/RPC3-POLR3F/RPC6-POLR3G/RPC7 heterotrimer required for transcription initiation and POLR3D/RPC4-POLR3E/RPC5 heterodimer involved in both transcription initiation and termination.

It is found in the nucleus. It localises to the nucleolus. DNA-dependent RNA polymerase catalyzes the transcription of DNA into RNA using the four ribonucleoside triphosphates as substrates. Common component of RNA polymerases I, II, and III which synthesize ribosomal RNA precursors, mRNA precursors and many functional non-coding RNAs, and small RNAs, such as 5S rRNA and tRNAs, respectively. Pol II is the central component of the basal RNA polymerase II transcription machinery. Pols are composed of mobile elements that move relative to each other. In Pol II, POLR2F/RPABC2 is part of the clamp element and together with parts of POLR2A/RPB1 and POLR2B/RPB2 forms a pocket to which the POLR2D/RPB4-POLR2G/RPB7 subcomplex binds. This Homo sapiens (Human) protein is DNA-directed RNA polymerases I, II, and III subunit RPABC2.